Consider the following 426-residue polypeptide: Gamma-glutamyl phosphate reductase (426 aa).

It belongs to the gamma-glutamyl phosphate reductase family.

Its subcellular location is the cytoplasm. It catalyses the reaction L-glutamate 5-semialdehyde + phosphate + NADP(+) = L-glutamyl 5-phosphate + NADPH + H(+). It participates in amino-acid biosynthesis; L-proline biosynthesis; L-glutamate 5-semialdehyde from L-glutamate: step 2/2. Functionally, catalyzes the NADPH-dependent reduction of L-glutamate 5-phosphate into L-glutamate 5-semialdehyde and phosphate. The product spontaneously undergoes cyclization to form 1-pyrroline-5-carboxylate. In Ralstonia pickettii (strain 12J), this protein is Gamma-glutamyl phosphate reductase.